The sequence spans 443 residues: Thymidine phosphorylase (443 aa).

It belongs to the thymidine/pyrimidine-nucleoside phosphorylase family. In terms of assembly, homodimer.

The enzyme catalyses thymidine + phosphate = 2-deoxy-alpha-D-ribose 1-phosphate + thymine. It functions in the pathway pyrimidine metabolism; dTMP biosynthesis via salvage pathway; dTMP from thymine: step 1/2. Its function is as follows. The enzymes which catalyze the reversible phosphorolysis of pyrimidine nucleosides are involved in the degradation of these compounds and in their utilization as carbon and energy sources, or in the rescue of pyrimidine bases for nucleotide synthesis. The chain is Thymidine phosphorylase from Shewanella denitrificans (strain OS217 / ATCC BAA-1090 / DSM 15013).